We begin with the raw amino-acid sequence, 563 residues long: Germacrene C/D synthase (563 aa).

The tract at residues 1 to 22 is disordered; sequence MESCLSVSSAPPPKKNIQEPVR. Aspartate 315, aspartate 319, and glutamate 468 together coordinate Mg(2+). Residues 315-319 carry the DDXXD motif motif; it reads DDTYD.

This sequence belongs to the terpene synthase family. Mg(2+) is required as a cofactor. Predominantly expressed in root.

The catalysed reaction is (2E,6E)-farnesyl diphosphate = germacrene C + diphosphate. It carries out the reaction (2E,6E)-farnesyl diphosphate = (-)-germacrene D + diphosphate. In terms of biological role, mediates formation of germacrene C and germacrene D using farnesyl diphosphate as substrate. Can also catalyze formation of trace of germacrene B. This chain is Germacrene C/D synthase (TPS1), found in Valeriana officinalis (Valerian).